The following is a 684-amino-acid chain: Dixin (684 aa).

The Calponin-homology (CH) domain maps to 20–127; it reads EQQLQAYVAW…LVLALAAHFK (108 aa). An actin-binding region spans residues 127–300; the sequence is KPGSSRTVSQ…LEKEMEEAKK (174 aa). The residue at position 186 (serine 186) is a Phosphoserine. The segment at 207–235 is disordered; it reads GQQRSPSESSCSSLTSPSPIHSAKSESII. Low complexity predominate over residues 211–228; the sequence is SPSESSCSSLTSPSPIHS. Residue serine 231 is modified to Phosphoserine. Coiled-coil stretches lie at residues 277–308 and 336–461; these read EATWEEQLLEQQEHLEKEMEEAKKMISGLQAL and LIII…LERE. The disordered stretch occupies residues 560–597; the sequence is KKQERKVRGRSPRNQASSEYRASWPPNSTLPHSQSSPA. The segment covering 571–597 has biased composition (polar residues); the sequence is PRNQASSEYRASWPPNSTLPHSQSSPA. Position 592 is a phosphoserine (serine 592). The DIX domain occupies 602 to 682; that stretch reads CTKVLYFTDR…KIVAWVEDHR (81 aa).

Belongs to the DIXDC1 family. As to quaternary structure, may bind filamentous actin. Interacts with the complex composed of DVL2 and Rac. Interacts with AXIN1; competes with MAP3K1. Interacts with MAP3K4 preventing MAP3K4 interaction with AXIN1. Directly interacts (via DIX domain) with DVL2 (via DIX domain). Interacts with gamma-tubulin. In terms of processing, phosphorylated on tyrosine and serine residues. Post-translationally, polyubiquitinated, leading to its proteasomal degradation. WNT3A signaling increases DIXDC1 protein levels by inhibiting its ubiquitination and subsequent degradation.

Its subcellular location is the cell junction. It localises to the focal adhesion. The protein localises to the cytoplasm. The protein resides in the cytoskeleton. It is found in the stress fiber. Functionally, positive effector of the Wnt signaling pathway; activates WNT3A signaling via DVL2. Regulates JNK activation by AXIN1 and DVL2. This is Dixin (Dixdc1) from Rattus norvegicus (Rat).